The chain runs to 356 residues: tRNA N6-adenosine threonylcarbamoyltransferase (356 aa).

The Fe cation site is built by His115 and His119. Substrate-binding positions include 138-142, Asp171, Gly184, and Asn283; that span reads LVSGG. Asp311 contacts Fe cation.

This sequence belongs to the KAE1 / TsaD family. The cofactor is Fe(2+).

The protein localises to the cytoplasm. It carries out the reaction L-threonylcarbamoyladenylate + adenosine(37) in tRNA = N(6)-L-threonylcarbamoyladenosine(37) in tRNA + AMP + H(+). Required for the formation of a threonylcarbamoyl group on adenosine at position 37 (t(6)A37) in tRNAs that read codons beginning with adenine. Is involved in the transfer of the threonylcarbamoyl moiety of threonylcarbamoyl-AMP (TC-AMP) to the N6 group of A37, together with TsaE and TsaB. TsaD likely plays a direct catalytic role in this reaction. The protein is tRNA N6-adenosine threonylcarbamoyltransferase of Prochlorococcus marinus subsp. pastoris (strain CCMP1986 / NIES-2087 / MED4).